A 404-amino-acid polypeptide reads, in one-letter code: Deoxyguanosinetriphosphate triphosphohydrolase-like protein (404 aa).

The segment at methionine 1–arginine 32 is disordered. The segment covering arginine 22 to arginine 32 has biased composition (basic and acidic residues). The region spanning arginine 69–aspartate 217 is the HD domain.

This sequence belongs to the dGTPase family. Type 2 subfamily.

In Nitrobacter hamburgensis (strain DSM 10229 / NCIMB 13809 / X14), this protein is Deoxyguanosinetriphosphate triphosphohydrolase-like protein.